The chain runs to 496 residues: Lysosomal Pro-X carboxypeptidase (496 aa).

The N-terminal stretch at 1-21 (MGRRALLLLLLSFLAPWATIA) is a signal peptide. Residues 22-45 (LRPALRALGSLHLPTNPTSLPAVA) constitute a propeptide that is removed on maturation. 2 N-linked (GlcNAc...) asparagine glycosylation sites follow: Asn-47 and Asn-101. The active-site Charge relay system is Ser-179. The tract at residues 194-334 (HMVVGALAAS…QNIFQALNVY (141 aa)) is SKS domain. 4 cysteine pairs are disulfide-bonded: Cys-215/Cys-372, Cys-233/Cys-310, Cys-264/Cys-343, and Cys-364/Cys-394. N-linked (GlcNAc...) asparagine glycans are attached at residues Asn-317, Asn-336, and Asn-345. Asn-415 is a glycosylation site (N-linked (GlcNAc...) asparagine). Active-site charge relay system residues include Asp-430 and His-455.

The protein belongs to the peptidase S28 family. Homodimer. As to expression, highest levels in placenta, lung and liver. Also present in heart, brain, pancreas and kidney.

The protein localises to the lysosome. It catalyses the reaction Cleavage of a -Pro-|-Xaa bond to release a C-terminal amino acid.. Cleaves C-terminal amino acids linked to proline in peptides such as angiotensin II, III and des-Arg9-bradykinin. This cleavage occurs at acidic pH, but enzymatic activity is retained with some substrates at neutral pH. This chain is Lysosomal Pro-X carboxypeptidase (PRCP), found in Homo sapiens (Human).